A 624-amino-acid chain; its full sequence is tRNA uridine 5-carboxymethylaminomethyl modification enzyme MnmG (624 aa).

FAD contacts are provided by residues 13-18, Val-125, and Ser-180; that span reads GAGHAG. Position 272–286 (272–286) interacts with NAD(+); sequence GPRYCPSIEDKVVKF. Gln-369 is a binding site for FAD.

This sequence belongs to the MnmG family. Homodimer. Heterotetramer of two MnmE and two MnmG subunits. FAD is required as a cofactor.

The protein resides in the cytoplasm. Its function is as follows. NAD-binding protein involved in the addition of a carboxymethylaminomethyl (cmnm) group at the wobble position (U34) of certain tRNAs, forming tRNA-cmnm(5)s(2)U34. The protein is tRNA uridine 5-carboxymethylaminomethyl modification enzyme MnmG of Thermodesulfovibrio yellowstonii (strain ATCC 51303 / DSM 11347 / YP87).